The chain runs to 397 residues: MSIYVASTTAPVNIATLKYWGKRDSMLNLPTNSSISVTLSQEDLRTLTSAATGPELAEDRLWLNGKPESLGNARTQQCLADLRALRRALETEEPDLPRMSEWKLHIVSENNFPTAAGLASSAAGFAALVVAVAKLYGLPQDYSEISKIARKGSGSACRSLYGGYVAWEMGAEADGSDSRAVQIADVEHWPEMRAAILVVSADRKDTPSTSGMQQTVHTSDLFKERVATVVPRRYGEMAAAIRARDFATFARLTMQDSNSFHATCLDSFPPIFYMNDTSRRIVKLCHLINEFYNETIVAYTFDAGPNAVLYYLAENEARLCGFLSAVFGANDGWETTFSTEQRATFAAQFDECVRGKLATDLDDELHRGVARLIFTKVGPGPQDTKSSLIDPETGLPR.

(R)-5-diphosphomevalonate-binding positions include 19 to 22 (YWGK), arginine 74, 153 to 158 (SGSACR), and threonine 209. The interval 378 to 397 (GPGPQDTKSSLIDPETGLPR) is disordered.

Belongs to the diphosphomevalonate decarboxylase family. In terms of assembly, homodimer.

It carries out the reaction (R)-5-diphosphomevalonate + ATP = isopentenyl diphosphate + ADP + phosphate + CO2. The protein operates within isoprenoid biosynthesis; isopentenyl diphosphate biosynthesis via mevalonate pathway; isopentenyl diphosphate from (R)-mevalonate: step 3/3. In terms of biological role, diphosphomevalonate decarboxylase; part of the second module of ergosterol biosynthesis pathway that includes the middle steps of the pathway. The second module is carried out in the vacuole and involves the formation of farnesyl diphosphate, which is also an important intermediate in the biosynthesis of ubiquinone, dolichol, heme and prenylated proteins. Activity by the mevalonate kinase ERG12 first converts mevalonate into 5-phosphomevalonate. 5-phosphomevalonate is then further converted to 5-diphosphomevalonate by the phosphomevalonate kinase ERG8. The diphosphomevalonate decarboxylase MVD1/ERG19 then produces isopentenyl diphosphate. The isopentenyl-diphosphate delta-isomerase IDI1 then catalyzes the 1,3-allylic rearrangement of the homoallylic substrate isopentenyl (IPP) to its highly electrophilic allylic isomer, dimethylallyl diphosphate (DMAPP). Finally the farnesyl diphosphate synthase ERG20 catalyzes the sequential condensation of isopentenyl pyrophosphate with dimethylallyl pyrophosphate, and then with the resultant geranylpyrophosphate to the ultimate product farnesyl pyrophosphate. The polypeptide is Diphosphomevalonate decarboxylase (Eremothecium gossypii (strain ATCC 10895 / CBS 109.51 / FGSC 9923 / NRRL Y-1056) (Yeast)).